A 355-amino-acid polypeptide reads, in one-letter code: Elongation factor Ts (355 aa).

The tract at residues 82 to 85 (TDFV) is involved in Mg(2+) ion dislocation from EF-Tu.

Belongs to the EF-Ts family.

It localises to the cytoplasm. Associates with the EF-Tu.GDP complex and induces the exchange of GDP to GTP. It remains bound to the aminoacyl-tRNA.EF-Tu.GTP complex up to the GTP hydrolysis stage on the ribosome. The polypeptide is Elongation factor Ts (Helicobacter pylori (strain P12)).